The following is a 237-amino-acid chain: Ribosomal RNA small subunit methyltransferase G (237 aa).

Residues G78, F83, 129 to 130 (AE), and R148 each bind S-adenosyl-L-methionine. Residues 216 to 237 (SKKKETPNKYPRKAGTPNKKPL) form a disordered region.

This sequence belongs to the methyltransferase superfamily. RNA methyltransferase RsmG family.

The protein localises to the cytoplasm. In terms of biological role, specifically methylates the N7 position of a guanine in 16S rRNA. The sequence is that of Ribosomal RNA small subunit methyltransferase G from Streptococcus agalactiae serotype III (strain NEM316).